A 1427-amino-acid chain; its full sequence is ATP-binding cassette transporter abc1 (1427 aa).

Residues 26–46 (LLLFYLSLFSLTNLFLIQKLF) form a helical membrane-spanning segment. The N-linked (GlcNAc...) asparagine glycan is linked to N49. Helical transmembrane passes span 63–83 (CLLE…SFYL), 87–107 (AVWW…NILS), 115–135 (LFSW…LISI), 155–175 (LLLP…PLFF), 197–217 (CSIF…WKSW), 262–282 (ILLM…TPLA), 298–318 (GNSP…ASVV), 345–367 (VLTS…YVYN), and 397–417 (MYFL…LAIL). Residues 262–549 (ILLMVFLSVL…LASVSRQFIQ (288 aa)) form the ABC transmembrane type-1 1 domain. N-linked (GlcNAc...) asparagine glycosylation is present at N437. Helical transmembrane passes span 489–509 (IIFK…TFAI) and 513–533 (IMGH…FGLL). N-linked (GlcNAc...) asparagine glycans are attached at residues N567, N581, and N601. The 229-residue stretch at 579-807 (FENTSLSWSP…PSTFFSSNTK (229 aa)) folds into the ABC transporter 1 domain. The helical transmembrane segment at 609–629 (FTLVVGSTGSGKSTLAMALLG) threads the bilayer. 614–621 (GSTGSGKS) contributes to the ATP binding site. N-linked (GlcNAc...) asparagine glycosylation is found at N658 and N703. The chain crosses the membrane as a helical span at residues 760 to 780 (IILFTHNVSLCLPIAENVIVL). N-linked (GlcNAc...) asparagine glycosylation is found at N782 and N842. The 281-residue stretch at 862–1142 (ILGSILLVMM…FVRANNEILT (281 aa)) folds into the ABC transmembrane type-1 2 domain. The next 3 membrane-spanning stretches (helical) occupy residues 866 to 886 (ILLV…IALW), 896 to 916 (LPSS…YFLM), and 973 to 993 (LLWA…ITML). N994 is a glycosylation site (N-linked (GlcNAc...) asparagine). 3 helical membrane-spanning segments follow: residues 995–1015 (VTLV…LVYL), 1086–1106 (LAIR…LIAL), and 1114–1134 (GLVG…LVFV). N-linked (GlcNAc...) asparagine glycans are attached at residues N1161 and N1184. The region spanning 1180-1422 (VSIKNLTVSY…RRAFWKMCKE (243 aa)) is the ABC transporter 2 domain. 1214–1221 (GRTGSGKS) is an ATP binding site. A helical transmembrane segment spans residues 1223-1243 (MGLTLLRFTMIMSGAVEVDGI). N1324 carries an N-linked (GlcNAc...) asparagine glycan.

The protein belongs to the ABC transporter superfamily. ABCC family. Conjugate transporter (TC 3.A.1.208) subfamily.

The protein resides in the membrane. This chain is ATP-binding cassette transporter abc1 (abc1), found in Schizosaccharomyces pombe (strain 972 / ATCC 24843) (Fission yeast).